An 89-amino-acid chain; its full sequence is UPF0335 protein OCAR_5086/OCA5_c28780 (89 aa).

This sequence belongs to the UPF0335 family.

The polypeptide is UPF0335 protein OCAR_5086/OCA5_c28780 (Afipia carboxidovorans (strain ATCC 49405 / DSM 1227 / KCTC 32145 / OM5) (Oligotropha carboxidovorans)).